The chain runs to 488 residues: Ammonium transporter 1 member 1 (488 aa).

Transmembrane regions (helical) follow at residues 47-69, 90-109, 129-148, 153-175, 195-217, 238-257, 281-303, 316-333, 337-356, 368-387, and 418-440; these read TYLL…LLAG, LFYY…NGFI, FLYQ…GSIA, FVAY…SHWF, VIDF…YGAL, HSAS…WYGF, AVGR…TLFG, VCNG…GCSV, WAAI…FNML, AAQL…GLFA, and HIIQ…FYIL.

Belongs to the ammonia transporter channel (TC 1.A.11.2) family. Root hairs and leaves.

It localises to the membrane. Functionally, ammonium transporter that may be involved in ammonium uptake from the soil. This chain is Ammonium transporter 1 member 1 (AMT1-1), found in Solanum lycopersicum (Tomato).